A 617-amino-acid chain; its full sequence is KIF-binding protein (617 aa).

Residues 48–83 form a disordered region; the sequence is ALLGPAPEDEDEPAADDGPGDQALGAGEPREAEGPG. The segment covering 54–66 has biased composition (acidic residues); sequence PEDEDEPAADDGP. Phosphoserine is present on Ser174.

Belongs to the KIF-binding protein family. In terms of assembly, interacts with KIF1B; positively regulates KIF1B microtubule motor activity. Interacts with STMN2. In the embryo it is expressed in cortical neurons; expression increases during neuronal development.

The protein resides in the cytoplasm. Its subcellular location is the cytoskeleton. In terms of biological role, activator of KIF1B plus-end-directed microtubule motor activity. Required for organization of axonal microtubules, and axonal outgrowth and maintenance during peripheral and central nervous system development. The polypeptide is KIF-binding protein (Mus musculus (Mouse)).